The primary structure comprises 1527 residues: Peroxidasin (1527 aa).

The first 23 residues, 1–23 (MRFMLLMLQLLGLLLLLAGGVQS), serve as a signal peptide directing secretion. The region spanning 24–53 (VYCPAGCTCLERTVRCIRAKLSAVPKLPQD) is the LRRNT domain. LRR repeat units lie at residues 51 to 74 (PQDTQTLDLRFNHIEELPANAFSG), 75 to 98 (LAQLTTLFLNDNELAYLQDGALNG), 99 to 122 (LTALRFVYLNNNRLSRLPATIFQR), 124 to 146 (PRLEAIFLENNDIWQLPAGLFDN), 147 to 170 (LPRLNRLIMYNNKLTQLPVDGFNR), and 172 to 196 (NNLKRLRLDGNAIDCNCGVYSLWRR). Ig-like C2-type domains lie at 236–322 (PQFL…QPVR), 365–453 (PHFT…ARIE), 458–545 (PEIL…ATIK), and 553–643 (PQLA…ALVT). 4 disulfide bridges follow: C257–C307, C388–C437, C479–C529, and C574–C627. N419 carries an N-linked (GlcNAc...) asparagine glycan. N-linked (GlcNAc...) asparagine glycosylation is found at N616, N673, N682, N731, and N767. Residues C768 and C784 are joined by a disulfide bond. D862 is a heme b binding site. H863 acts as the Proton acceptor in catalysis. D864 provides a ligand contact to Ca(2+). Cystine bridges form between C882-C892 and C886-C909. Ca(2+)-binding residues include T941, Y943, D945, and S947. Residue N962 is glycosylated (N-linked (GlcNAc...) asparagine). C994 and C1005 are oxidised to a cystine. 2 residues coordinate heme b: E1015 and H1109. 2 N-linked (GlcNAc...) asparagine glycosylation sites follow: N1120 and N1213. Disulfide bonds link C1212/C1269 and C1310/C1336. A coiled-coil region spans residues 1403–1441 (NEERVSGLEELIGSFQKELKKLHKKLRKLEDSCNSADSE). The VWFC domain occupies 1463-1524 (SHCVDDKGTT…PPEACCPHCP (62 aa)).

It belongs to the peroxidase family. XPO subfamily. As to quaternary structure, homotrimer; disulfide-linked. The cofactor is Ca(2+). Heme b serves as cofactor. As to expression, expressed in hemocytes. Also expressed in the fat body and gastric caeca.

Its subcellular location is the secreted. The enzyme catalyses (5R)-5-hydroxy-L-lysyl-[collagen] + L-methionyl-[collagen] + H2O2 = [collagen]-(5R)-5-hydroxy-L-lysyl-N-S-L-methionyl-[collagen] + 2 H2O + H(+). It catalyses the reaction bromide + H2O2 = hypobromite + H2O. The catalysed reaction is (5R)-5-hydroxy-L-lysyl-[collagen] + L-methionyl-[collagen] + hypobromite = [collagen]-(5R)-5-hydroxy-L-lysyl-N-S-L-methionyl-[collagen] + bromide + H2O + H(+). It carries out the reaction L-lysyl-[collagen] + L-methionyl-[collagen] + H2O2 = [collagen]-L-lysyl-N-S-L-methionyl-[collagen] + 2 H2O + H(+). The enzyme catalyses L-lysyl-[collagen] + L-methionyl-[collagen] + hypobromite = [collagen]-L-lysyl-N-S-L-methionyl-[collagen] + bromide + H2O + H(+). It catalyses the reaction L-tyrosyl-[protein] + bromide + H2O2 + H(+) = 3-bromo-L-tyrosyl-[protein] + 2 H2O. The catalysed reaction is hypobromite + L-tyrosyl-[protein] + H(+) = 3-bromo-L-tyrosyl-[protein] + H2O. Catalyzes the two-electron oxidation of bromide by hydrogen peroxide and generates hypobromite as a reactive intermediate which mediates the formation of sulfilimine cross-links between methionine and hydroxylysine residues within an uncross-linked collagen IV NC1 hexamer. Plays a role in extracellular matrix consolidation, phagocytosis and defense. The polypeptide is Peroxidasin (Drosophila melanogaster (Fruit fly)).